We begin with the raw amino-acid sequence, 306 residues long: Pantothenate kinase (306 aa).

An ATP-binding site is contributed by 91-98 (GSVAVGKS).

It belongs to the prokaryotic pantothenate kinase family.

It localises to the cytoplasm. The catalysed reaction is (R)-pantothenate + ATP = (R)-4'-phosphopantothenate + ADP + H(+). It functions in the pathway cofactor biosynthesis; coenzyme A biosynthesis; CoA from (R)-pantothenate: step 1/5. The sequence is that of Pantothenate kinase from Streptococcus thermophilus (strain ATCC BAA-491 / LMD-9).